Consider the following 84-residue polypeptide: Putative ribosomal RNA large subunit methyltransferase H 2 (84 aa).

Residues G33 and 52-57 (FSKMTF) contribute to the S-adenosyl-L-methionine site.

This sequence belongs to the RNA methyltransferase RlmH family. Homodimer.

It is found in the cytoplasm. It carries out the reaction pseudouridine(1915) in 23S rRNA + S-adenosyl-L-methionine = N(3)-methylpseudouridine(1915) in 23S rRNA + S-adenosyl-L-homocysteine + H(+). In terms of biological role, specifically methylates the pseudouridine at position 1915 (m3Psi1915) in 23S rRNA. This Clostridium perfringens (strain SM101 / Type A) protein is Putative ribosomal RNA large subunit methyltransferase H 2 (rlmH2).